A 494-amino-acid chain; its full sequence is MANYFNTLNLREQLDQLGRCRFMDRSEFATEADYLKGKKVVIVGCGAQGLNQGLNMRDSGLDVAYALRQAAIDEQRQSYKNAKENGFEVGSYETLIPQADLVVNLTPDKQHTNVVETVMPLMKEGAALGYSHGFNVVEEGMQIRKDLTVVMVAPKCPGTEVREEYKRGFGVPTLIAVHPENDPKGEGWDIAKAWAAATGGHRAGCLESSFVAEVKSDLMGEQTILCGMLQAGSIVCYEKMVAEGIDPGYAGKLLQYGWETITEALKFGGITHMMDRLSNPAKIKAFELSEELKDLMRPLYNKHMDDIISGHFSSTMMADWANDDANLLGWRAETGETAFENYPSTDVEISEQEYFDNGILMVAMVRAGVELAFEAMTASGIIDESAYYESLHELPLIANTIARKRLYEMNVVISDTAEYGNYLFANVATPLLREKFMPSVGTDVIGKGLGETSNQVDNATLIAVNETIRNHPVEYIGEELRGYMTDMKRIAVGG.

The region spanning 14–208 is the KARI N-terminal Rossmann domain; that stretch reads LDQLGRCRFM…GGHRAGCLES (195 aa). NADP(+) contacts are provided by residues 45 to 48, Arg68, Arg76, Ser78, and 108 to 110; these read CGAQ and DKQ. Residue His132 is part of the active site. Gly158 is a binding site for NADP(+). KARI C-terminal knotted domains are found at residues 209–344 and 345–487; these read SFVA…NYPS and TDVE…MTDM. Residues Asp217, Glu221, Glu389, and Glu393 each coordinate Mg(2+). Residue Ser414 coordinates substrate.

It belongs to the ketol-acid reductoisomerase family. Requires Mg(2+) as cofactor.

It catalyses the reaction (2R)-2,3-dihydroxy-3-methylbutanoate + NADP(+) = (2S)-2-acetolactate + NADPH + H(+). It carries out the reaction (2R,3R)-2,3-dihydroxy-3-methylpentanoate + NADP(+) = (S)-2-ethyl-2-hydroxy-3-oxobutanoate + NADPH + H(+). Its pathway is amino-acid biosynthesis; L-isoleucine biosynthesis; L-isoleucine from 2-oxobutanoate: step 2/4. It functions in the pathway amino-acid biosynthesis; L-valine biosynthesis; L-valine from pyruvate: step 2/4. Functionally, involved in the biosynthesis of branched-chain amino acids (BCAA). Catalyzes an alkyl-migration followed by a ketol-acid reduction of (S)-2-acetolactate (S2AL) to yield (R)-2,3-dihydroxy-isovalerate. In the isomerase reaction, S2AL is rearranged via a Mg-dependent methyl migration to produce 3-hydroxy-3-methyl-2-ketobutyrate (HMKB). In the reductase reaction, this 2-ketoacid undergoes a metal-dependent reduction by NADPH to yield (R)-2,3-dihydroxy-isovalerate. In Vibrio vulnificus (strain CMCP6), this protein is Ketol-acid reductoisomerase (NADP(+)).